A 529-amino-acid chain; its full sequence is hal-like protein DDB_G0273787/DDB_G0273081 (529 aa).

The 5-imidazolinone (Ala-Gly) cross-link spans 151–153 (ASG). 2,3-didehydroalanine (Ser) is present on serine 152.

The protein belongs to the PAL/histidase family. Contains an active site 4-methylidene-imidazol-5-one (MIO), which is formed autocatalytically by cyclization and dehydration of residues Ala-Ser-Gly.

The protein localises to the cytoplasm. It catalyses the reaction L-histidine = trans-urocanate + NH4(+). It participates in amino-acid degradation; L-histidine degradation into L-glutamate; N-formimidoyl-L-glutamate from L-histidine: step 1/3. This Dictyostelium discoideum (Social amoeba) protein is hal-like protein DDB_G0273787/DDB_G0273081.